The following is a 208-amino-acid chain: Redox-sensing transcriptional repressor Rex 1 (208 aa).

Residues 15-54 (SYYMCLERLLDEGVEVVSSEELARRLDLKASQIRKDLSYF) constitute a DNA-binding region (H-T-H motif). Residue 89-94 (GAGNIG) participates in NAD(+) binding.

This sequence belongs to the transcriptional regulatory Rex family. Homodimer.

The protein localises to the cytoplasm. In terms of biological role, modulates transcription in response to changes in cellular NADH/NAD(+) redox state. The polypeptide is Redox-sensing transcriptional repressor Rex 1 (Thermotoga maritima (strain ATCC 43589 / DSM 3109 / JCM 10099 / NBRC 100826 / MSB8)).